A 284-amino-acid polypeptide reads, in one-letter code: Formamidopyrimidine-DNA glycosylase (284 aa).

The active-site Schiff-base intermediate with DNA is the Pro-2. Residue Glu-3 is the Proton donor of the active site. The Proton donor; for beta-elimination activity role is filled by Lys-61. The DNA site is built by His-95, Arg-114, and Arg-159. The FPG-type zinc-finger motif lies at 244-278 (WVYGRKGQPCRVCNTPIERIRLAGRSTHFCPTCQR). Arg-268 acts as the Proton donor; for delta-elimination activity in catalysis.

This sequence belongs to the FPG family. Monomer. The cofactor is Zn(2+).

It carries out the reaction Hydrolysis of DNA containing ring-opened 7-methylguanine residues, releasing 2,6-diamino-4-hydroxy-5-(N-methyl)formamidopyrimidine.. It catalyses the reaction 2'-deoxyribonucleotide-(2'-deoxyribose 5'-phosphate)-2'-deoxyribonucleotide-DNA = a 3'-end 2'-deoxyribonucleotide-(2,3-dehydro-2,3-deoxyribose 5'-phosphate)-DNA + a 5'-end 5'-phospho-2'-deoxyribonucleoside-DNA + H(+). Functionally, involved in base excision repair of DNA damaged by oxidation or by mutagenic agents. Acts as a DNA glycosylase that recognizes and removes damaged bases. Has a preference for oxidized purines, such as 7,8-dihydro-8-oxoguanine (8-oxoG). Has AP (apurinic/apyrimidinic) lyase activity and introduces nicks in the DNA strand. Cleaves the DNA backbone by beta-delta elimination to generate a single-strand break at the site of the removed base with both 3'- and 5'-phosphates. The polypeptide is Formamidopyrimidine-DNA glycosylase (Gloeobacter violaceus (strain ATCC 29082 / PCC 7421)).